A 276-amino-acid polypeptide reads, in one-letter code: Mitochondrial outer membrane protein porin 6 (276 aa).

It belongs to the eukaryotic mitochondrial porin (TC 1.B.8.1) family.

The protein resides in the mitochondrion outer membrane. In terms of biological role, forms a channel through the mitochondrial outer membrane that allows diffusion of small hydrophilic molecules. The channel adopts an open conformation at low or zero membrane potential and a closed conformation at potentials above 30-40 mV. The open state has a weak anion selectivity whereas the closed state is cation-selective. The sequence is that of Mitochondrial outer membrane protein porin 6 (VDAC6) from Oryza sativa subsp. japonica (Rice).